Here is a 65-residue protein sequence, read N- to C-terminus: MPKMKSHRGAAKRFKKTGTGKLKRAKAFKSHILTKKSPKTKRNLRKGGYVSKSQEKVMKKLLPYL.

The tract at residues 1 to 25 (MPKMKSHRGAAKRFKKTGTGKLKRA) is disordered.

Belongs to the bacterial ribosomal protein bL35 family.

In Clostridium botulinum (strain Eklund 17B / Type B), this protein is Large ribosomal subunit protein bL35.